The primary structure comprises 133 residues: Small ribosomal subunit protein uS8 (133 aa).

The protein belongs to the universal ribosomal protein uS8 family. In terms of assembly, part of the 30S ribosomal subunit. Contacts proteins S5 and S12.

Functionally, one of the primary rRNA binding proteins, it binds directly to 16S rRNA central domain where it helps coordinate assembly of the platform of the 30S subunit. This Amoebophilus asiaticus (strain 5a2) protein is Small ribosomal subunit protein uS8.